The following is a 327-amino-acid chain: Malate dehydrogenase (327 aa).

11–17 is an NAD(+) binding site; sequence GAAGNIS. Residues Arg-92 and Arg-98 each contribute to the substrate site. Residues Asn-105, Gln-112, and 129–131 contribute to the NAD(+) site; that span reads VGN. The substrate site is built by Asn-131 and Arg-162. His-187 acts as the Proton acceptor in catalysis. Residues 304 to 327 form a disordered region; that stretch reads SQEKMKATEQELSEERDAVEHLLP.

This sequence belongs to the LDH/MDH superfamily. MDH type 2 family.

The catalysed reaction is (S)-malate + NAD(+) = oxaloacetate + NADH + H(+). Functionally, catalyzes the reversible oxidation of malate to oxaloacetate. This chain is Malate dehydrogenase, found in Psychrobacter sp. (strain PRwf-1).